We begin with the raw amino-acid sequence, 206 residues long: Guanylate kinase (206 aa).

The Guanylate kinase-like domain occupies 5–183 (GNLFVVAAPS…AVFDLKTIVH (179 aa)). Residue 12-19 (APSGAGKS) participates in ATP binding.

Belongs to the guanylate kinase family.

The protein localises to the cytoplasm. The enzyme catalyses GMP + ATP = GDP + ADP. In terms of biological role, essential for recycling GMP and indirectly, cGMP. This is Guanylate kinase from Polaromonas sp. (strain JS666 / ATCC BAA-500).